We begin with the raw amino-acid sequence, 456 residues long: Adenylosuccinate synthetase isozyme 1 (456 aa).

A disordered region spans residues 1 to 30 (MSSGWSQNDHRSYSNPPPVSGKRPRNDSGN). Residues 41–47 (GDEGKGK) and 69–71 (GHT) contribute to the GTP site. Catalysis depends on Asp42, which acts as the Proton acceptor. Mg(2+)-binding residues include Asp42 and Gly69. Asp42 contacts substrate. IMP-binding positions include 42–45 (DEGK) and 67–70 (NAGH). The active-site Proton donor is the His70. Phosphoserine is present on Ser130. Residues Thr162, Arg176, Asn255, Thr270, and Arg334 each coordinate IMP. 330–336 (VTTGRKR) serves as a coordination point for substrate. GTP-binding positions include Arg336, 362–364 (KLD), and 444–447 (GVGK).

It belongs to the adenylosuccinate synthetase family. Homodimer. Requires Mg(2+) as cofactor.

Its subcellular location is the cytoplasm. The catalysed reaction is IMP + L-aspartate + GTP = N(6)-(1,2-dicarboxyethyl)-AMP + GDP + phosphate + 2 H(+). It functions in the pathway purine metabolism; AMP biosynthesis via de novo pathway; AMP from IMP: step 1/2. In terms of biological role, component of the purine nucleotide cycle (PNC), which interconverts IMP and AMP to regulate the nucleotide levels in various tissues, and which contributes to glycolysis and ammoniagenesis. Catalyzes the first committed step in the biosynthesis of AMP from IMP. This chain is Adenylosuccinate synthetase isozyme 1 (adss1), found in Danio rerio (Zebrafish).